Reading from the N-terminus, the 76-residue chain is Acyl carrier protein (76 aa).

One can recognise a Carrier domain in the interval 1–76 (MSIEERVKKI…SAIDYVQNNQ (76 aa)). Position 36 is an O-(pantetheine 4'-phosphoryl)serine (serine 36).

Belongs to the acyl carrier protein (ACP) family. 4'-phosphopantetheine is transferred from CoA to a specific serine of apo-ACP by AcpS. This modification is essential for activity because fatty acids are bound in thioester linkage to the sulfhydryl of the prosthetic group.

Its subcellular location is the cytoplasm. It functions in the pathway lipid metabolism; fatty acid biosynthesis. Its function is as follows. Carrier of the growing fatty acid chain in fatty acid biosynthesis. The sequence is that of Acyl carrier protein from Pasteurella multocida (strain Pm70).